The primary structure comprises 142 residues: HTH-type transcriptional regulator MntR (142 aa).

An HTH dtxR-type domain is found at Met-1–Thr-63. Mn(2+) is bound by residues Asp-8, Glu-11, His-77, Glu-99, Glu-102, and His-103.

Belongs to the DtxR/MntR family. As to quaternary structure, homodimer.

It is found in the cytoplasm. With respect to regulation, DNA binding is strongly activated by Mn(2+). In terms of biological role, central regulator of manganese homeostasis. This Bacillus cereus (strain B4264) protein is HTH-type transcriptional regulator MntR.